Reading from the N-terminus, the 370-residue chain is 4-hydroxy-3-methylbut-2-en-1-yl diphosphate synthase (flavodoxin) (370 aa).

Residues Cys-268, Cys-271, Cys-303, and Glu-310 each contribute to the [4Fe-4S] cluster site.

The protein belongs to the IspG family. The cofactor is [4Fe-4S] cluster.

It carries out the reaction (2E)-4-hydroxy-3-methylbut-2-enyl diphosphate + oxidized [flavodoxin] + H2O + 2 H(+) = 2-C-methyl-D-erythritol 2,4-cyclic diphosphate + reduced [flavodoxin]. It participates in isoprenoid biosynthesis; isopentenyl diphosphate biosynthesis via DXP pathway; isopentenyl diphosphate from 1-deoxy-D-xylulose 5-phosphate: step 5/6. Its function is as follows. Converts 2C-methyl-D-erythritol 2,4-cyclodiphosphate (ME-2,4cPP) into 1-hydroxy-2-methyl-2-(E)-butenyl 4-diphosphate. In Bacillus anthracis (strain A0248), this protein is 4-hydroxy-3-methylbut-2-en-1-yl diphosphate synthase (flavodoxin).